We begin with the raw amino-acid sequence, 100 residues long: MARKGLIQREKKREKLEQKYRLIRRSSKKEISTAPSLSEKWKIHGKLQSSPRNSAPTRLHRRCFSTGRPRANYRDFRLSGHILREMVHACLLPGATRSSW.

Belongs to the universal ribosomal protein uS14 family. Part of the 30S ribosomal subunit.

It localises to the plastid. The protein resides in the chloroplast. Its function is as follows. Binds 16S rRNA, required for the assembly of 30S particles. The protein is Small ribosomal subunit protein uS14c of Oenothera argillicola (Appalachian evening primrose).